The chain runs to 156 residues: MSRRHKAEKREINPDPKFGDLVITKFMNAVMLHGKKSVAESIVYGALDVIEAKAKSEPVALFHQALDNVAPHIEVRSRRVGGATYQVPVDVRPERRQALAIRWLINAARGRNETTMIDRLSGELLDAANNRGSAVKKREDTHRMAEANRAFSHYRW.

The protein belongs to the universal ribosomal protein uS7 family. Part of the 30S ribosomal subunit. Contacts proteins S9 and S11.

One of the primary rRNA binding proteins, it binds directly to 16S rRNA where it nucleates assembly of the head domain of the 30S subunit. Is located at the subunit interface close to the decoding center, probably blocks exit of the E-site tRNA. This Brucella anthropi (strain ATCC 49188 / DSM 6882 / CCUG 24695 / JCM 21032 / LMG 3331 / NBRC 15819 / NCTC 12168 / Alc 37) (Ochrobactrum anthropi) protein is Small ribosomal subunit protein uS7.